A 670-amino-acid chain; its full sequence is Oxidoreductase PigB (670 aa).

The N-terminal stretch at 1–19 (MIIQRLFGILYMLAGLAKA) is a signal peptide. 4 helical membrane-spanning segments follow: residues 53 to 73 (GDVI…ILML), 76 to 96 (LWTT…VVIL), 98 to 118 (QSQP…LYML), and 238 to 258 (LVFF…VGFI).

This sequence belongs to the flavin monoamine oxidase family. FAD is required as a cofactor.

The protein resides in the membrane. The protein operates within antibiotic biosynthesis; prodigiosin biosynthesis. Functionally, involved in the biosynthesis of 2-methyl-3-n-amyl-pyrrole (MAP), one of the terminal products involved in the biosynthesis of the red antibiotic prodigiosin (Pig). Catalyzes the oxidation of dihydro form of MAP (H2MAP) to yield MAP. This Serratia sp. (strain ATCC 39006) (Prodigiosinella confusarubida) protein is Oxidoreductase PigB.